The sequence spans 431 residues: Chaperone SurA (431 aa).

Residues 1-20 form the signal peptide; that stretch reads MKNWRTFILGLALCANGALA. PpiC domains follow at residues 171 to 272 and 282 to 382; these read GAEF…KVND and VTEV…QLID.

It localises to the periplasm. It carries out the reaction [protein]-peptidylproline (omega=180) = [protein]-peptidylproline (omega=0). Chaperone involved in the correct folding and assembly of outer membrane proteins. Recognizes specific patterns of aromatic residues and the orientation of their side chains, which are found more frequently in integral outer membrane proteins. May act in both early periplasmic and late outer membrane-associated steps of protein maturation. In Sodalis glossinidius (strain morsitans), this protein is Chaperone SurA.